Reading from the N-terminus, the 448-residue chain is UDP-N-acetylmuramate--L-alanine ligase (448 aa).

Residue 118–124 participates in ATP binding; it reads GTHGKTT.

This sequence belongs to the MurCDEF family.

It localises to the cytoplasm. It catalyses the reaction UDP-N-acetyl-alpha-D-muramate + L-alanine + ATP = UDP-N-acetyl-alpha-D-muramoyl-L-alanine + ADP + phosphate + H(+). Its pathway is cell wall biogenesis; peptidoglycan biosynthesis. Functionally, cell wall formation. This is UDP-N-acetylmuramate--L-alanine ligase from Flavobacterium psychrophilum (strain ATCC 49511 / DSM 21280 / CIP 103535 / JIP02/86).